A 487-amino-acid chain; its full sequence is MHVTPELAPVAKVGGLADVVFGLGRELEIRGNHVEIILPKYDCMRYDQIWGLQRTFDDLWVPWYGGAIHCSVYFGFVHGRKCFFIEPHSQDNFFNRGAVYGFHDDIFRFAFFSRAAMEFLWKAGKNPDIIHCHDWQTALVPVYLYEIYQPMGMRHPRVCFTIHNFKHQGVTGAQVLHASGLDRPEYYFHYDRLRDNHNPHAINLMKGGIVYANFVTTVSPRYAMEAKDQGQGFGLEPTLHIHHMKYGGVVNGIDYDVWNPEIDPHIPVHFNVDTIEGKYADKKALRDRLLLADNEKPIVSFVGRLDPQKGIELIRHALFYTLGQGGQFVLLGSSPDGAINGYFWGLKRQFNDNPDCHLEIGYNEELAHLVYAGSDVMVVPSRFEPCGLTQLIAMRYGTIPVVREIGGLADTVIDKDFSHRPLHERNGYVFRDYDERGLESALGRAIACYYQYPDHFRELMKNAMRYDYSWNHPGQDYLNIYHYIRDK.

ADP-alpha-D-glucose is bound at residue K12.

This sequence belongs to the glycosyltransferase 1 family. Bacterial/plant glycogen synthase subfamily.

The catalysed reaction is [(1-&gt;4)-alpha-D-glucosyl](n) + ADP-alpha-D-glucose = [(1-&gt;4)-alpha-D-glucosyl](n+1) + ADP + H(+). The protein operates within glycan biosynthesis; glycogen biosynthesis. Synthesizes alpha-1,4-glucan chains using ADP-glucose. In Methylococcus capsulatus (strain ATCC 33009 / NCIMB 11132 / Bath), this protein is Glycogen synthase 2.